The primary structure comprises 194 residues: Holliday junction branch migration complex subunit RuvA (194 aa).

The tract at residues M1–A64 is domain I. A domain II region spans residues T65–A143. Residues A144 to A147 are flexible linker. A domain III region spans residues A147 to K194.

It belongs to the RuvA family. In terms of assembly, homotetramer. Forms an RuvA(8)-RuvB(12)-Holliday junction (HJ) complex. HJ DNA is sandwiched between 2 RuvA tetramers; dsDNA enters through RuvA and exits via RuvB. An RuvB hexamer assembles on each DNA strand where it exits the tetramer. Each RuvB hexamer is contacted by two RuvA subunits (via domain III) on 2 adjacent RuvB subunits; this complex drives branch migration. In the full resolvosome a probable DNA-RuvA(4)-RuvB(12)-RuvC(2) complex forms which resolves the HJ.

The protein localises to the cytoplasm. Functionally, the RuvA-RuvB-RuvC complex processes Holliday junction (HJ) DNA during genetic recombination and DNA repair, while the RuvA-RuvB complex plays an important role in the rescue of blocked DNA replication forks via replication fork reversal (RFR). RuvA specifically binds to HJ cruciform DNA, conferring on it an open structure. The RuvB hexamer acts as an ATP-dependent pump, pulling dsDNA into and through the RuvAB complex. HJ branch migration allows RuvC to scan DNA until it finds its consensus sequence, where it cleaves and resolves the cruciform DNA. The sequence is that of Holliday junction branch migration complex subunit RuvA from Neisseria meningitidis serogroup A / serotype 4A (strain DSM 15465 / Z2491).